The primary structure comprises 401 residues: Bifunctional enzyme IspD/IspF (401 aa).

The tract at residues 1 to 234 is 2-C-methyl-D-erythritol 4-phosphate cytidylyltransferase; the sequence is MQKPPRTAAI…SRLTAALGDI (234 aa). The 2-C-methyl-D-erythritol 2,4-cyclodiphosphate synthase stretch occupies residues 235-401; the sequence is RTGTGYDVHA…SPWGAEGQAS (167 aa). A divalent metal cation is bound by residues D241 and H243. 4-CDP-2-C-methyl-D-erythritol 2-phosphate-binding positions include 241 to 243 and 267 to 268; these read DVH and HS. A divalent metal cation is bound at residue H275. Residues 289 to 291, 365 to 368, F372, and R375 contribute to the 4-CDP-2-C-methyl-D-erythritol 2-phosphate site; these read DIG and TTSE.

This sequence in the N-terminal section; belongs to the IspD/TarI cytidylyltransferase family. IspD subfamily. In the C-terminal section; belongs to the IspF family. The cofactor is a divalent metal cation.

It carries out the reaction 2-C-methyl-D-erythritol 4-phosphate + CTP + H(+) = 4-CDP-2-C-methyl-D-erythritol + diphosphate. It catalyses the reaction 4-CDP-2-C-methyl-D-erythritol 2-phosphate = 2-C-methyl-D-erythritol 2,4-cyclic diphosphate + CMP. Its pathway is isoprenoid biosynthesis; isopentenyl diphosphate biosynthesis via DXP pathway; isopentenyl diphosphate from 1-deoxy-D-xylulose 5-phosphate: step 2/6. The protein operates within isoprenoid biosynthesis; isopentenyl diphosphate biosynthesis via DXP pathway; isopentenyl diphosphate from 1-deoxy-D-xylulose 5-phosphate: step 4/6. In terms of biological role, bifunctional enzyme that catalyzes the formation of 4-diphosphocytidyl-2-C-methyl-D-erythritol from CTP and 2-C-methyl-D-erythritol 4-phosphate (MEP) (IspD), and catalyzes the conversion of 4-diphosphocytidyl-2-C-methyl-D-erythritol 2-phosphate (CDP-ME2P) to 2-C-methyl-D-erythritol 2,4-cyclodiphosphate (ME-CPP) with a corresponding release of cytidine 5-monophosphate (CMP) (IspF). The polypeptide is Bifunctional enzyme IspD/IspF (Rhodopseudomonas palustris (strain HaA2)).